A 396-amino-acid chain; its full sequence is Digeranylgeranylglycerophospholipid reductase 2 (396 aa).

FAD-binding residues include Ala13, Glu32, Cys43, Ala44, Gly46, Arg92, Ala116, Asp278, Gly290, and Leu291.

Belongs to the geranylgeranyl reductase family. DGGGPL reductase subfamily. FAD is required as a cofactor.

It carries out the reaction a 2,3-bis-O-phytanyl-sn-glycerol 1-phospholipid + 8 A = a 2,3-bis-O-(geranylgeranyl)-sn-glycerol 1-phospholipid + 8 AH2. The catalysed reaction is 2,3-bis-O-(phytanyl)-sn-glycerol 1-phosphate + 8 A = 2,3-bis-O-(geranylgeranyl)-sn-glycerol 1-phosphate + 8 AH2. The enzyme catalyses CDP-2,3-bis-O-(geranylgeranyl)-sn-glycerol + 8 AH2 = CDP-2,3-bis-O-(phytanyl)-sn-glycerol + 8 A. It catalyses the reaction archaetidylserine + 8 AH2 = 2,3-bis-O-phytanyl-sn-glycero-3-phospho-L-serine + 8 A. It participates in membrane lipid metabolism; glycerophospholipid metabolism. Is involved in the reduction of 2,3-digeranylgeranylglycerophospholipids (unsaturated archaeols) into 2,3-diphytanylglycerophospholipids (saturated archaeols) in the biosynthesis of archaeal membrane lipids. Catalyzes the formation of archaetidic acid (2,3-di-O-phytanyl-sn-glyceryl phosphate) from 2,3-di-O-geranylgeranylglyceryl phosphate (DGGGP) via the hydrogenation of each double bond of the isoprenoid chains. Is also probably able to reduce double bonds of geranyl groups in CDP-2,3-bis-O-(geranylgeranyl)-sn-glycerol and archaetidylserine, thus acting at various stages in the biosynthesis of archaeal membrane lipids. The polypeptide is Digeranylgeranylglycerophospholipid reductase 2 (Methanopyrus kandleri (strain AV19 / DSM 6324 / JCM 9639 / NBRC 100938)).